Consider the following 276-residue polypeptide: Bis(5'-nucleosyl)-tetraphosphatase, symmetrical (276 aa).

It belongs to the Ap4A hydrolase family.

It catalyses the reaction P(1),P(4)-bis(5'-adenosyl) tetraphosphate + H2O = 2 ADP + 2 H(+). Hydrolyzes diadenosine 5',5'''-P1,P4-tetraphosphate to yield ADP. This is Bis(5'-nucleosyl)-tetraphosphatase, symmetrical from Neisseria gonorrhoeae (strain ATCC 700825 / FA 1090).